The following is a 251-amino-acid chain: Alanyl-tRNA editing protein AlaX-M (251 aa).

His-107, His-111, Cys-210, and His-214 together coordinate Zn(2+).

It belongs to the class-II aminoacyl-tRNA synthetase family. Editing domain AlaX-M subfamily. Zn(2+) serves as cofactor.

The protein resides in the cytoplasm. In terms of biological role, functions in trans to edit the amino acid moiety from mischarged Ser-tRNA(Ala). Recognition depends, at least in part, on the acceptor stem of tRNA(Ala). The polypeptide is Alanyl-tRNA editing protein AlaX-M (alaXM) (Methanosarcina mazei (strain ATCC BAA-159 / DSM 3647 / Goe1 / Go1 / JCM 11833 / OCM 88) (Methanosarcina frisia)).